The following is a 548-amino-acid chain: Chaperonin GroEL (548 aa).

Residues 30–33, K51, 87–91, G415, and D495 contribute to the ATP site; these read TLGP and DGTTT.

It belongs to the chaperonin (HSP60) family. Forms a cylinder of 14 subunits composed of two heptameric rings stacked back-to-back. Interacts with the co-chaperonin GroES.

It localises to the cytoplasm. It catalyses the reaction ATP + H2O + a folded polypeptide = ADP + phosphate + an unfolded polypeptide.. In terms of biological role, together with its co-chaperonin GroES, plays an essential role in assisting protein folding. The GroEL-GroES system forms a nano-cage that allows encapsulation of the non-native substrate proteins and provides a physical environment optimized to promote and accelerate protein folding. The polypeptide is Chaperonin GroEL (Erwinia tasmaniensis (strain DSM 17950 / CFBP 7177 / CIP 109463 / NCPPB 4357 / Et1/99)).